Here is a 181-residue protein sequence, read N- to C-terminus: MNTEKISLIKASIKSIPDYPKAGILFRDVTSLMEDPAAYKATIDLLVDTYKGMGFTKIVGTEARGFLFGAPLALELGVGFIPVRKPGKLPRQTVAQSYELEYGTDTLEIHTDAIVEGDKVLMVDDLLATGGTIEATTKLIRQLGGVVEHAAFVINLPEIGGDKRLQGLGLEVFSICEFDGH.

The protein belongs to the purine/pyrimidine phosphoribosyltransferase family. Homodimer.

The protein localises to the cytoplasm. It catalyses the reaction AMP + diphosphate = 5-phospho-alpha-D-ribose 1-diphosphate + adenine. The protein operates within purine metabolism; AMP biosynthesis via salvage pathway; AMP from adenine: step 1/1. Functionally, catalyzes a salvage reaction resulting in the formation of AMP, that is energically less costly than de novo synthesis. The polypeptide is Adenine phosphoribosyltransferase (Vibrio atlanticus (strain LGP32) (Vibrio splendidus (strain Mel32))).